The chain runs to 210 residues: Protein GET1 (210 aa).

The Lumenal portion of the chain corresponds to Met-1–Leu-4. The helical transmembrane segment at Leu-5 to Asn-24 threads the bilayer. At Thr-25 to Arg-110 the chain is on the cytoplasmic side. A coiled-coil region spans residues Asn-39–Leu-95. The helical transmembrane segment at Phe-111–Phe-131 threads the bilayer. The Lumenal portion of the chain corresponds to Glu-132–Thr-155. A helical transmembrane segment spans residues Val-156–Ala-172. Residues Gly-173–Leu-210 are Cytoplasmic-facing. The tract at residues Lys-189–Leu-210 is disordered.

The protein belongs to the WRB/GET1 family. As to quaternary structure, interacts with GET3.

Its subcellular location is the endoplasmic reticulum membrane. Its function is as follows. Required for the post-translational delivery of tail-anchored (TA) proteins to the endoplasmic reticulum. Acts as a membrane receptor for soluble GET3, which recognizes and selectively binds the transmembrane domain of TA proteins in the cytosol. The sequence is that of Protein GET1 from Coccidioides posadasii (strain C735) (Valley fever fungus).